The chain runs to 620 residues: Guanylate cyclase soluble subunit beta-1 (620 aa).

A heme-binding site is contributed by His105. Positions 421–554 constitute a Guanylate cyclase domain; it reads TILFSGIVGF…NTVNLTSRTE (134 aa).

This sequence belongs to the adenylyl cyclase class-4/guanylyl cyclase family. The active enzyme is formed by a heterodimer of an alpha and a beta subunit. Heterodimer with GUCY1A1. Can also form inactive homodimers in vitro. The cofactor is heme.

The protein localises to the cytoplasm. It catalyses the reaction GTP = 3',5'-cyclic GMP + diphosphate. Its activity is regulated as follows. Activated by nitric oxide in the presence of magnesium or manganese ions. Its function is as follows. Mediates responses to nitric oxide (NO) by catalyzing the biosynthesis of the signaling molecule cGMP. The sequence is that of Guanylate cyclase soluble subunit beta-1 (Gucy1b1) from Mus musculus (Mouse).